The chain runs to 132 residues: Large ribosomal subunit protein bL12 (132 aa).

Positions 102–126 are enriched in basic and acidic residues; it reads APKPIKEATNKDDAESIKKQLEEAG. A disordered region spans residues 102-132; sequence APKPIKEATNKDDAESIKKQLEEAGAKASVK.

This sequence belongs to the bacterial ribosomal protein bL12 family. In terms of assembly, homodimer. Part of the ribosomal stalk of the 50S ribosomal subunit. Forms a multimeric L10(L12)X complex, where L10 forms an elongated spine to which 2 to 4 L12 dimers bind in a sequential fashion. Binds GTP-bound translation factors.

Forms part of the ribosomal stalk which helps the ribosome interact with GTP-bound translation factors. Is thus essential for accurate translation. This chain is Large ribosomal subunit protein bL12, found in Rippkaea orientalis (strain PCC 8801 / RF-1) (Cyanothece sp. (strain PCC 8801)).